Here is a 303-residue protein sequence, read N- to C-terminus: Formylglycine-generating enzyme (303 aa).

Residues Asn188, Ile189, Asp202, Tyr204, Asn222, Val223, Gly225, and Val227 each coordinate Ca(2+). Cu(+) contacts are provided by Cys269 and Cys274.

This sequence belongs to the sulfatase-modifying factor family. The cofactor is Cu(+).

It carries out the reaction L-cysteinyl-[sulfatase] + 2 a thiol + O2 = an organic disulfide + 3-oxo-L-alanyl-[sulfatase] + hydrogen sulfide + H2O + H(+). It participates in protein modification; sulfatase oxidation. Functionally, oxidase that catalyzes the conversion of cysteine to 3-oxoalanine on target proteins. 3-oxoalanine modification, which is also named formylglycine (fGly), occurs in the maturation of arylsulfatases and some alkaline phosphatases that use the hydrated form of 3-oxoalanine as a catalytic nucleophile. This is Formylglycine-generating enzyme from Thermomonospora curvata (strain ATCC 19995 / DSM 43183 / JCM 3096 / KCTC 9072 / NBRC 15933 / NCIMB 10081 / Henssen B9).